A 178-amino-acid polypeptide reads, in one-letter code: 2-C-methyl-D-erythritol 2,4-cyclodiphosphate synthase (178 aa).

Residues D24, H26, and H61 each contribute to the a divalent metal cation site. D24–H26 is a 4-CDP-2-C-methyl-D-erythritol 2-phosphate binding site. T150 to E153 is a binding site for 4-CDP-2-C-methyl-D-erythritol 2-phosphate.

It belongs to the IspF family. Homotrimer. It depends on a divalent metal cation as a cofactor.

It catalyses the reaction 4-CDP-2-C-methyl-D-erythritol 2-phosphate = 2-C-methyl-D-erythritol 2,4-cyclic diphosphate + CMP. It functions in the pathway isoprenoid biosynthesis; isopentenyl diphosphate biosynthesis via DXP pathway; isopentenyl diphosphate from 1-deoxy-D-xylulose 5-phosphate: step 4/6. Involved in the biosynthesis of isopentenyl diphosphate (IPP) and dimethylallyl diphosphate (DMAPP), two major building blocks of isoprenoid compounds. Catalyzes the conversion of 4-diphosphocytidyl-2-C-methyl-D-erythritol 2-phosphate (CDP-ME2P) to 2-C-methyl-D-erythritol 2,4-cyclodiphosphate (ME-CPP) with a corresponding release of cytidine 5-monophosphate (CMP). This Chlamydia trachomatis serovar L2 (strain ATCC VR-902B / DSM 19102 / 434/Bu) protein is 2-C-methyl-D-erythritol 2,4-cyclodiphosphate synthase.